The primary structure comprises 151 residues: Nucleoside diphosphate kinase (151 aa).

ATP-binding residues include Lys-11, Phe-59, Arg-87, Arg-104, and Asn-114. His-117 (pros-phosphohistidine intermediate) is an active-site residue.

It belongs to the NDK family. In terms of assembly, homotrimer. Mg(2+) serves as cofactor.

The catalysed reaction is a 2'-deoxyribonucleoside 5'-diphosphate + ATP = a 2'-deoxyribonucleoside 5'-triphosphate + ADP. It carries out the reaction a ribonucleoside 5'-diphosphate + ATP = a ribonucleoside 5'-triphosphate + ADP. Its function is as follows. Major role in the synthesis of nucleoside triphosphates other than ATP. The ATP gamma phosphate is transferred to the NDP beta phosphate via a ping-pong mechanism, using a phosphorylated active-site intermediate. This is Nucleoside diphosphate kinase (ndk1) from Schizosaccharomyces pombe (strain 972 / ATCC 24843) (Fission yeast).